The following is a 508-amino-acid chain: Flavonoid 3',5'-hydroxylase 2 (508 aa).

Residue Cys443 coordinates heme.

Belongs to the cytochrome P450 family. Heme serves as cofactor. In terms of tissue distribution, flowers.

It localises to the microsome. The protein localises to the endoplasmic reticulum. It catalyses the reaction a 3',5'-unsubstituted flavanone + 2 reduced [NADPH--hemoprotein reductase] + 2 O2 = a 3',5'-dihydroxyflavanone + 2 oxidized [NADPH--hemoprotein reductase] + 2 H2O + 2 H(+). The protein operates within pigment biosynthesis; anthocyanin biosynthesis. Catalyzes the 3'5'-hydroxylation of naringenin and eriodictyol to form 5,7,3,'4',5'-pentahydroxyflavanone and 3',5'-hydroxylation of dihydrokaempferol and dihydroquercetin to form dihydromyricetin. In Petunia hybrida (Petunia), this protein is Flavonoid 3',5'-hydroxylase 2 (CYP75A3).